Consider the following 110-residue polypeptide: Endoribonuclease SymE (110 aa).

The SpoVT-AbrB domain maps to 29-74 (SRYPDYTRIPALTMKGQWLEAAGFATGTEVDVRVMNGCIVLTAQQP).

It belongs to the SymE family.

It localises to the cytoplasm. In terms of biological role, involved in the degradation and recycling of damaged RNA. It is itself a target for degradation by the ATP-dependent protease Lon. This is Endoribonuclease SymE from Salmonella heidelberg (strain SL476).